The following is a 673-amino-acid chain: Leucine zipper putative tumor suppressor 3 (673 aa).

3 disordered regions span residues 1-157 (MAKL…CSEP), 172-239 (FHSM…QHLA), and 251-317 (IGTA…PPSP). Residues 79–92 (SRERPGRYPSEDKG) show a composition bias toward basic and acidic residues. The segment covering 173–186 (HSMQNLCPPQTNGT) has biased composition (polar residues). Residues 215–235 (GLSDSGRNSLTSLPTYSSSYS) show a composition bias toward low complexity. Residues 258-269 (SGSGGSSGGGSG) show a composition bias toward gly residues. Over residues 274-294 (GTSDSGRASSKSGSSSSMGRP) the composition is skewed to low complexity. Residues 295–307 (GHLGSGEGGGGGL) show a composition bias toward gly residues. Serine 316 and serine 318 each carry phosphoserine. 2 coiled-coil regions span residues 317-496 (PSAL…SLRD) and 571-639 (RALR…RLRE). A disordered region spans residues 635–673 (RRLRERGAAGGASTPTPQHGEEKKAWTPSRLERIESTEI). Residues 653 to 673 (HGEEKKAWTPSRLERIESTEI) are compositionally biased toward basic and acidic residues.

This sequence belongs to the LZTS3 family. As to quaternary structure, interacts (via C-terminus) with SHANK3 (via PDZ domain). Interacts (via coiled coil) with SIPA1L1. Can form homooligomers.

Its subcellular location is the synapse. The protein localises to the postsynaptic density. The protein resides in the cell projection. It is found in the dendritic spine. It localises to the dendrite. Its subcellular location is the cytoplasm. The protein localises to the cytoskeleton. Functionally, may be involved in promoting the maturation of dendritic spines, probably via regulating SIPA1L1 levels at the postsynaptic density of synapses. This Homo sapiens (Human) protein is Leucine zipper putative tumor suppressor 3.